A 458-amino-acid polypeptide reads, in one-letter code: Histidine--tRNA ligase (458 aa).

This sequence belongs to the class-II aminoacyl-tRNA synthetase family. In terms of assembly, homodimer.

It is found in the cytoplasm. It catalyses the reaction tRNA(His) + L-histidine + ATP = L-histidyl-tRNA(His) + AMP + diphosphate + H(+). This chain is Histidine--tRNA ligase, found in Azobacteroides pseudotrichonymphae genomovar. CFP2.